Reading from the N-terminus, the 246-residue chain is Alpha-tubulin N-acetyltransferase (246 aa).

An N-acetyltransferase domain is found at 21-202 (LTLVPDGVSR…NNFVVFHSFF (182 aa)). Acetyl-CoA-binding positions include 135 to 148 (FYVD…GYGK) and 172 to 181 (SNKLLGFLRK).

This sequence belongs to the acetyltransferase ATAT1 family.

It catalyses the reaction L-lysyl-[alpha-tubulin] + acetyl-CoA = N(6)-acetyl-L-lysyl-[alpha-tubulin] + CoA + H(+). Specifically acetylates 'Lys-40' in alpha-tubulin on the lumenal side of microtubules. Promotes microtubule destabilization and accelerates microtubule dynamics; this activity may be independent of acetylation activity. Acetylates alpha-tubulin with a slow enzymatic rate, due to a catalytic site that is not optimized for acetyl transfer. Enters the microtubule through each end and diffuses quickly throughout the lumen of microtubules. Acetylates only long/old microtubules because of its slow acetylation rate since it does not have time to act on dynamically unstable microtubules before the enzyme is released. This is Alpha-tubulin N-acetyltransferase from Leishmania major.